The primary structure comprises 1132 residues: Ubiquitin-associated protein 2 (1132 aa).

Residues 1–29 form a disordered region; the sequence is MMTSVSNDRCRGAREKPQMPTAHAAQSQK. Over residues 8–17 the composition is skewed to basic and acidic residues; the sequence is DRCRGAREKP. The 45-residue stretch at 48–92 folds into the UBA domain; the sequence is KNDSDFEAKVKQLMEVTGKNQDECIVALHDCNGDVNKAINILLEG. 10 disordered regions span residues 95 to 202, 221 to 248, 331 to 351, 380 to 479, 602 to 679, 713 to 749, 875 to 919, 996 to 1033, 1040 to 1059, and 1087 to 1132; these read DTTS…YSES, GTDE…YGLK, NNQM…SPQS, LKPP…STVS, TSSA…VSTL, PLSQ…VEST, PYSG…LNPG, GGYG…GSVY, DKQG…SALG, and PHSQ…YWTN. Residues 109-130 show a composition bias toward basic and acidic residues; the sequence is FGRESSENKENREKRTEREASR. R166 bears the Omega-N-methylarginine mark. Residues 168–182 show a composition bias toward basic residues; the sequence is KRARGRGFGRGRGRG. Composition is skewed to polar residues over residues 233–244 and 331–340; these read HSMSQEPPSKSS and NNQMAPGTAN. Low complexity predominate over residues 341 to 351; it reads STSASSYSPQS. The segment covering 392-404 has biased composition (polar residues); that stretch reads SSAQQNDTASPPA. S433 and S440 each carry phosphoserine. Composition is skewed to low complexity over residues 436-448 and 602-618; these read LSQL…HQTQ and TSSA…SSSY. Over residues 619 to 630 the composition is skewed to polar residues; sequence DQSSVHTRIAYQ. S631 bears the Phosphoserine mark. Positions 631–644 are enriched in low complexity; the sequence is SSASPPDSAPGSVA. The span at 652 to 662 shows a compositional bias: polar residues; the sequence is SQHTVDTTSSV. Residues 713 to 722 show a composition bias toward low complexity; that stretch reads PLSQLSSSLS. Residues 723 to 742 are compositionally biased toward polar residues; that stretch reads GHQNSMTSAHATRSTSTPHT. Low complexity predominate over residues 897–914; sequence PAQAQQSQSQTHHTAQQP. The segment covering 1101–1115 has biased composition (low complexity); that stretch reads PSGSGQRSQPSSLQP. Residues 1116-1132 show a composition bias toward polar residues; sequence KSQASKPTYGSAPYWTN.

As to quaternary structure, may interact with ANXA2.

The protein resides in the nucleus. The protein localises to the chromosome. Its subcellular location is the cytoplasm. Functionally, recruits the ubiquitination machinery to RNA polymerase II for polyubiquitination, removal and degradation, when the transcription-coupled nucleotide excision repair (TC-NER) machinery fails to resolve DNA damage. May promote the degradation of ANXA2. In Mus musculus (Mouse), this protein is Ubiquitin-associated protein 2.